The chain runs to 286 residues: CLA biosynthesis dehydrogenase/reductase (286 aa).

Positions 37, 63, 64, 90, 156, and 160 each coordinate NAD(+). The active-site Proton acceptor is Tyr-156.

This sequence belongs to the short-chain dehydrogenases/reductases (SDR) family.

The protein localises to the cytoplasm. The catalysed reaction is (10S)-hydroxy-(12Z)-octadecenoate + NAD(+) = 10-oxo-(12Z)-octadecenoate + NADH + H(+). It catalyses the reaction 10-oxo-(11E)-octadecenoate + NADH + H(+) = 10-hydroxy-(11E)-octadecenoate + NAD(+). The enzyme catalyses 10-oxooctadecanoate + NADH + H(+) = 10-hydroxyoctadecanoate + NAD(+). Its pathway is lipid metabolism; fatty acid metabolism. Functionally, is involved in a saturation metabolic pathway of polyunsaturated fatty acids, that detoxifies unsaturated fatty acids and generates hydroxy fatty acids, oxo fatty acids, conjugated fatty acids such as conjugated linoleic acids (CLAs), and partially saturated trans-fatty acids as intermediates. CLA-DH catalyzes the dehydrogenation/reduction steps in the production of 10-oxo-(12Z)-octadecenoate, 10-hydroxy-(11E)-octadecenoate and 10-hydroxyoctadecanoate during linoleate metabolism. As part of the gut microbiome, this enzyme modifies host fatty acid composition and is expected to improve human health by altering lipid metabolism related to the onset of metabolic syndrome. In Lactiplantibacillus plantarum (Lactobacillus plantarum), this protein is CLA biosynthesis dehydrogenase/reductase.